The sequence spans 196 residues: GTP cyclohydrolase 1 (196 aa).

Cysteine 86, histidine 89, and cysteine 158 together coordinate Zn(2+).

The protein belongs to the GTP cyclohydrolase I family. In terms of assembly, homomer.

It carries out the reaction GTP + H2O = 7,8-dihydroneopterin 3'-triphosphate + formate + H(+). Its pathway is cofactor biosynthesis; 7,8-dihydroneopterin triphosphate biosynthesis; 7,8-dihydroneopterin triphosphate from GTP: step 1/1. This Clostridium botulinum (strain Kyoto / Type A2) protein is GTP cyclohydrolase 1.